The primary structure comprises 169 residues: Cell division inhibitor SulA (169 aa).

Residues 106-112 (ALRTGNY) are ftsZ binding. The tract at residues 162–169 (KIHSNLYH) is lon protease binding.

This sequence belongs to the SulA family. In terms of assembly, interacts with FtsZ. Post-translationally, is rapidly cleaved and degraded by the Lon protease once DNA damage is repaired.

Functionally, component of the SOS system and an inhibitor of cell division. Accumulation of SulA causes rapid cessation of cell division and the appearance of long, non-septate filaments. In the presence of GTP, binds a polymerization-competent form of FtsZ in a 1:1 ratio, thus inhibiting FtsZ polymerization and therefore preventing it from participating in the assembly of the Z ring. This mechanism prevents the premature segregation of damaged DNA to daughter cells during cell division. In Escherichia coli O81 (strain ED1a), this protein is Cell division inhibitor SulA.